A 441-amino-acid polypeptide reads, in one-letter code: Probable D-serine dehydratase (441 aa).

An N6-(pyridoxal phosphate)lysine modification is found at K101.

This sequence belongs to the serine/threonine dehydratase family. DsdA subfamily. The cofactor is pyridoxal 5'-phosphate.

It carries out the reaction D-serine = pyruvate + NH4(+). The protein is Probable D-serine dehydratase of Geobacillus kaustophilus (strain HTA426).